A 290-amino-acid chain; its full sequence is Glutaredoxin domain-containing cysteine-rich protein 1 (290 aa).

The 108-residue stretch at Leu127–Gln234 folds into the Glutaredoxin domain.

Belongs to the GRXCR1 family. As to expression, in the inner ear, expressed predominantly in sensory hair cells and their stereocilia bundles with higher levels in outer hair cells (OHC) at P1 and in inner hair cells (IHC) at P5. At P1, expression is prominent in each row of stereocilia within bundles including immature shorter stereocilia. Expression is also observed in apical microvilli of sensory cells at P1 and in kinocilia at P1 and P5. In the adult, expression is localized throughout the length of the stereocilia of both OHC and IHC (at protein level).

It localises to the cell projection. The protein resides in the stereocilium. The protein localises to the microvillus. Its subcellular location is the kinocilium. May play a role in actin filament architecture in developing stereocilia of sensory cells. The protein is Glutaredoxin domain-containing cysteine-rich protein 1 (Grxcr1) of Mus musculus (Mouse).